We begin with the raw amino-acid sequence, 141 residues long: NADH dehydrogenase [ubiquinone] 1 alpha subcomplex subunit 11 (141 aa).

2 helical membrane-spanning segments follow: residues 21 to 43 (KTYI…RVSL) and 58 to 80 (RYTF…SAQV).

This sequence belongs to the complex I NDUFA11 subunit family. As to quaternary structure, complex I is composed of 45 different subunits.

The protein localises to the mitochondrion inner membrane. Its function is as follows. Accessory subunit of the mitochondrial membrane respiratory chain NADH dehydrogenase (Complex I), that is believed not to be involved in catalysis. Complex I functions in the transfer of electrons from NADH to the respiratory chain. The immediate electron acceptor for the enzyme is believed to be ubiquinone. The protein is NADH dehydrogenase [ubiquinone] 1 alpha subcomplex subunit 11 (Ndufa11) of Mus musculus (Mouse).